The chain runs to 215 residues: Thymidylate kinase (215 aa).

An ATP-binding site is contributed by 13–20; sequence GLEGAGKS.

The protein belongs to the thymidylate kinase family.

The catalysed reaction is dTMP + ATP = dTDP + ADP. In terms of biological role, phosphorylation of dTMP to form dTDP in both de novo and salvage pathways of dTTP synthesis. This is Thymidylate kinase from Shewanella frigidimarina (strain NCIMB 400).